Reading from the N-terminus, the 469-residue chain is Glutamate--tRNA ligase (469 aa).

Residues 9 to 19 carry the 'HIGH' region motif; it reads PSPTGFLHVGG. Zn(2+)-binding residues include cysteine 98, cysteine 100, cysteine 125, and aspartate 127. Positions 236–240 match the 'KMSKS' region motif; sequence KLSKR. Lysine 239 is a binding site for ATP.

It belongs to the class-I aminoacyl-tRNA synthetase family. Glutamate--tRNA ligase type 1 subfamily. As to quaternary structure, monomer. It depends on Zn(2+) as a cofactor.

It is found in the cytoplasm. The enzyme catalyses tRNA(Glu) + L-glutamate + ATP = L-glutamyl-tRNA(Glu) + AMP + diphosphate. Catalyzes the attachment of glutamate to tRNA(Glu) in a two-step reaction: glutamate is first activated by ATP to form Glu-AMP and then transferred to the acceptor end of tRNA(Glu). In Shewanella baltica (strain OS155 / ATCC BAA-1091), this protein is Glutamate--tRNA ligase.